The primary structure comprises 116 residues: Large ribosomal subunit protein uL18 (116 aa).

The protein belongs to the universal ribosomal protein uL18 family. In terms of assembly, part of the 50S ribosomal subunit; part of the 5S rRNA/L5/L18/L25 subcomplex. Contacts the 5S and 23S rRNAs.

Functionally, this is one of the proteins that bind and probably mediate the attachment of the 5S RNA into the large ribosomal subunit, where it forms part of the central protuberance. The protein is Large ribosomal subunit protein uL18 of Acinetobacter baylyi (strain ATCC 33305 / BD413 / ADP1).